The following is a 1251-amino-acid chain: Insulin receptor substrate 1 (1251 aa).

The residue at position 3 (Ser-3) is a Phosphoserine. A mediates interaction with PHIP region spans residues 3 to 137 (SPPESDGFSD…GAGGGGGSCS (135 aa)). The region spanning 12–115 (DVRKVGYLRK…WYQALLQLHN (104 aa)) is the PH domain. Ser-99 is modified (phosphoserine; by CK2). In terms of domain architecture, IRS-type PTB spans 160 to 264 (FKEVWQVILK…EAMRAMSDEF (105 aa)). The tract at residues 262–430 (DEFRPRSKSQ…SDGGFISSDE (169 aa)) is disordered. The segment covering 269-281 (KSQSSSNCSNPIS) has biased composition (low complexity). A Phosphoserine modification is found at Ser-270. Ser-307 is subject to Phosphoserine; by RPS6KB1. At Ser-312 the chain carries Phosphoserine; by IKKB, MAPK8 and RPS6KB1. Ser-323, Ser-330, Ser-345, and Ser-348 each carry phosphoserine. Basic residues predominate over residues 354–363 (THAHRHRGSA). 2 stretches are compositionally biased toward low complexity: residues 383-404 (SPSA…GSTS) and 412-424 (SSAS…SDGG). Position 419 is a phosphoserine (Ser-419). Residues Thr-446 and Thr-453 each carry the phosphothreonine modification. Tyr-465 is modified (phosphotyrosine; by INSR). Residues 465–468 (YICM) carry the YXXM motif 1 motif. The disordered stretch occupies residues 494-513 (YTPGTGLGTSPALAGDEASS). Ser-527 is modified (phosphoserine; by RPS6KB1). Residues 551–554 (YTEM) carry the YXXM motif 2 motif. Residues 594–610 (RRGGHHRPDSSTLHTDD) are compositionally biased toward basic and acidic residues. The tract at residues 594–616 (RRGGHHRPDSSTLHTDDGYMPMS) is disordered. The residue at position 612 (Tyr-612) is a Phosphotyrosine; by INSR. The YXXM motif 3 motif lies at 612 to 615 (YMPM). Ser-629 carries the phosphoserine modification. At Tyr-632 the chain carries Phosphotyrosine; by INSR. Positions 632–635 (YMPM) match the YXXM motif 4 motif. Residue Ser-636 is modified to Phosphoserine; by RPS6KB1. The residue at position 662 (Tyr-662) is a Phosphotyrosine. The short motif at 662–665 (YMMM) is the YXXM motif 5 element. Residues 668–692 (SGGCSPDIGGGPSSSSSSTVPSGSS) form a disordered region. The short motif at 730–733 (YMNM) is the YXXM motif 6 element. Disordered regions lie at residues 734 to 753 (SPVG…GPED) and 769 to 946 (FKHT…EETG). The segment covering 774–783 (RPGEPEEGAR) has biased composition (basic and acidic residues). Phosphoserine; by AMPK and SIK2 is present on Ser-792. 2 stretches are compositionally biased toward low complexity: residues 799-813 (AATA…SSDS) and 875-891 (QQQQ…QQQQ). Ser-901 carries the post-translational modification Phosphoserine. Residue Tyr-905 is modified to Phosphotyrosine; by INSR. Positions 905–907 (YVN) are GRB2-binding. Over residues 924-937 (SRSSPSVRCPSQLQ) the composition is skewed to polar residues. 2 positions are modified to phosphotyrosine; by INSR: Tyr-950 and Tyr-998. 3 consecutive short sequence motifs (YXXM motif) follow at residues 950 to 953 (YMKM), 998 to 1001 (YMTM), and 1021 to 1024 (YADM). Disordered regions lie at residues 1091–1124 (NQSA…RVGN) and 1130–1149 (AGAA…DVKR). Ser-1109 and Ser-1110 each carry phosphoserine. A compositionally biased stretch (polar residues) spans 1111-1123 (ETFSSTPSATRVG). Tyr-1188 is subject to Phosphotyrosine; by INSR. Residue Lys-1195 forms a Glycyl lysine isopeptide (Lys-Gly) (interchain with G-Cter in ubiquitin) linkage. A disordered region spans residues 1195–1251 (KDFKQRPQECTPQPQPPPPPPPHQPLGSSESSSTRRSSEDLSAYASISFQKQPEDLQ). Positions 1207–1218 (QPQPPPPPPPHQ) are enriched in pro residues. The residue at position 1238 (Tyr-1238) is a Phosphotyrosine; by INSR.

In terms of assembly, interacts with UBTF and PIK3CA. Interacts (via phosphorylated YXXM motifs) with PIK3R1. Interacts with ROCK1 and FER. Interacts (via PH domain) with PHIP. Interacts with GRB2. Interacts with SOCS7. Interacts (via IRS-type PTB domain) with IGF1R and INSR (via the tyrosine-phosphorylated NPXY motif). Interacts with ALK. Interacts with EIF2AK2/PKR. Interacts with GKAP1. Interacts with DGKZ in the absence of insulin; insulin stimulation decreases this interaction. Found in a ternary complex with DGKZ and PIP5K1A in the absence of insulin stimulation. Interacts with SQSTM1; the interaction is disrupted by the presence of tensin TNS2. Interacts with NCK1 (via SH2 domain). Interacts with NCK2 (via SH3 domain). Interacts with SH2B1; this interaction enhances leptin-induced activation of the PI3-kinase pathway. Interacts with DVL2; this interaction promotes the Wnt/beta-catenin signaling pathway. Interacts with JAK1. Serine phosphorylation of IRS1 is a mechanism for insulin resistance. Ser-312 phosphorylation inhibits insulin action through disruption of IRS1 interaction with the insulin receptor. Phosphorylation of Tyr-905 is required for GRB2-binding. Phosphorylated by ALK. Phosphorylated at Ser-270, Ser-307, Ser-636 and Ser-1109 by RPS6KB1; phosphorylation induces accelerated degradation of IRS1. Phosphorylated on tyrosine residues in response to insulin. In skeletal muscles, dephosphorylated on Tyr-612 by TNS2 under anabolic conditions; dephosphorylation results in the proteasomal degradation of IRS1. In terms of processing, ubiquitinated by the Cul7-RING(FBXW8) complex in a mTOR-dependent manner, leading to its degradation: the Cul7-RING(FBXW8) complex recognizes and binds IRS1 previously phosphorylated by S6 kinase (RPS6KB1 or RPS6KB2). Ubiquitinated by TRAF4 through 'Lys-29' linkage; this ubiquitination regulates the interaction of IRS1 with IGFR and IRS1 tyrosine phosphorylation upon IGF1 stimulation. Post-translationally, S-nitrosylation at by BLVRB inhibits its activity.

Its subcellular location is the cytoplasm. The protein resides in the nucleus. Its function is as follows. Signaling adapter protein that participates in the signal transduction from two prominent receptor tyrosine kinases, insulin receptor/INSR and insulin-like growth factor I receptor/IGF1R. Plays therefore an important role in development, growth, glucose homeostasis as well as lipid metabolism. Upon phosphorylation by the insulin receptor, functions as a signaling scaffold that propagates insulin action through binding to SH2 domain-containing proteins including the p85 regulatory subunit of PI3K, NCK1, NCK2, GRB2 or SHP2. Recruitment of GRB2 leads to the activation of the guanine nucleotide exchange factor SOS1 which in turn triggers the Ras/Raf/MEK/MAPK signaling cascade. Activation of the PI3K/AKT pathway is responsible for most of insulin metabolic effects in the cell, and the Ras/Raf/MEK/MAPK is involved in the regulation of gene expression and in cooperation with the PI3K pathway regulates cell growth and differentiation. Acts a positive regulator of the Wnt/beta-catenin signaling pathway through suppression of DVL2 autophagy-mediated degradation leading to cell proliferation. The polypeptide is Insulin receptor substrate 1 (IRS1) (Chlorocebus aethiops (Green monkey)).